A 509-amino-acid chain; its full sequence is ATP synthase subunit alpha (509 aa).

Residue 169–176 (GDRQTGKT) coordinates ATP.

Belongs to the ATPase alpha/beta chains family. As to quaternary structure, F-type ATPases have 2 components, CF(1) - the catalytic core - and CF(0) - the membrane proton channel. CF(1) has five subunits: alpha(3), beta(3), gamma(1), delta(1), epsilon(1). CF(0) has three main subunits: a(1), b(2) and c(9-12). The alpha and beta chains form an alternating ring which encloses part of the gamma chain. CF(1) is attached to CF(0) by a central stalk formed by the gamma and epsilon chains, while a peripheral stalk is formed by the delta and b chains.

Its subcellular location is the cell inner membrane. It carries out the reaction ATP + H2O + 4 H(+)(in) = ADP + phosphate + 5 H(+)(out). Its function is as follows. Produces ATP from ADP in the presence of a proton gradient across the membrane. The alpha chain is a regulatory subunit. The chain is ATP synthase subunit alpha from Bradyrhizobium diazoefficiens (strain JCM 10833 / BCRC 13528 / IAM 13628 / NBRC 14792 / USDA 110).